The chain runs to 685 residues: MRDPAFPGAAMAYHPFHAPRPADFPMSAFLAAAQPSFFPALTLPPAALGKPLSDPSLAGAAEAGLHVSALGHHHQAAHLRSLKSLEPEEEVEDDPKVTLEAKELWDQFHKLGTEMVITKSGRRMFPPFKVRVSGLDKKAKYILLMDIVAADDCRYKFHNSRWMVAGKADPEMPKRMYIHPDSPATGEQWMAKPVAFHKLKLTNNISDKHGFTILNSMHKYQPRFHIVRANDILKLPYSTFRTYVFPETDFIAVTAYQNDKITQLKIDNNPFAKGFRDTGNGRREKRKQLSLPSLRMYEEQCKADRDGAESDASSCDPAPGRDSLHSPLSTEPSPLRLHRSNREEKFGADSDQELDRREVRTARSHSPVGHRSPPSSPRLEDRGKDKNTPEKKSESPESRKDGGDNVFSRSLEKDKGESRRKEDSKSDPECGSLSKETFAPLMVQTDSPPHLSASHLQSLALSGLHGQQFFNPLNAAQPLFIHPGQFTMGPGAFSAMGMGHLLASMTGASALDNGSLSSVQGATGAATFPFHLSQHMLASQGIPMPAFGGLFPYPYTYMAAAAAAASAMPATSAATTMPRNPFLSSTRPRLRFNPYQIPVGIPPSTNLLTTGLSASLNPGSESSKPGSSRESSPIPDTPGHKRSHSNSLSPKASMKDSINELQNIQRLVSGLESQREVSPGRETPK.

The T-box DNA-binding region spans 104-277; it reads LWDQFHKLGT…NNPFAKGFRD (174 aa). Disordered stretches follow at residues 270-433 and 606-660; these read PFAK…CGSL and NLLT…SINE. 4 stretches are compositionally biased toward basic and acidic residues: residues 296–308, 340–361, 378–403, and 410–428; these read MYEEQCKADRDGA, SNREEKFGADSDQELDRREVRT, RLEDRGKDKNTPEKKSESPESRKDGG, and SLEKDKGESRRKEDSKSDP. Residues 606–617 show a composition bias toward polar residues; it reads NLLTTGLSASLN. Positions 618 to 633 are enriched in low complexity; that stretch reads PGSESSKPGSSRESSP. The stretch at 652–676 forms a coiled coil; that stretch reads ASMKDSINELQNIQRLVSGLESQRE.

As to quaternary structure, binds DNA as a monomer.

It localises to the nucleus. Functionally, transcription factor which acts as a transcriptional repressor. May also function as a transcriptional activator. Binds to the palindromic T site 5'-TTCACACCTAGGTGTGAA-3' DNA sequence, or a half-site, which are present in the regulatory region of several genes. The protein is T-box transcription factor TBX2 (tbx2) of Xenopus tropicalis (Western clawed frog).